The sequence spans 521 residues: GMP synthase [glutamine-hydrolyzing] (521 aa).

Positions 5 to 197 (KILILDFGSQ…VLDICGAQPG (193 aa)) constitute a Glutamine amidotransferase type-1 domain. Cys81 functions as the Nucleophile in the catalytic mechanism. Active-site residues include His171 and Glu173. The 193-residue stretch at 198 to 390 (WTMPNYIEEA…LGLPREMVYR (193 aa)) folds into the GMPS ATP-PPase domain. 225–231 (SGGVDSS) is a binding site for ATP.

In terms of assembly, homodimer.

The enzyme catalyses XMP + L-glutamine + ATP + H2O = GMP + L-glutamate + AMP + diphosphate + 2 H(+). It functions in the pathway purine metabolism; GMP biosynthesis; GMP from XMP (L-Gln route): step 1/1. Functionally, catalyzes the synthesis of GMP from XMP. This Neisseria gonorrhoeae (strain NCCP11945) protein is GMP synthase [glutamine-hydrolyzing].